A 590-amino-acid chain; its full sequence is Putative DEAD-box ATP-dependent RNA helicase 51 (590 aa).

Positions methionine 1–glycine 81 are disordered. Residues alanine 40–threonine 51 show a composition bias toward polar residues. Basic and acidic residues predominate over residues asparagine 59–lysine 78. Positions lysine 86–alanine 114 match the Q motif motif. One can recognise a Helicase ATP-binding domain in the interval isoleucine 117–arginine 293. ATP is bound at residue alanine 130–threonine 137. A DEAD box motif is present at residues aspartate 240–aspartate 243. The Helicase C-terminal domain maps to valine 329–leucine 481. The interval leucine 549–phenylalanine 590 is disordered. Over residues serine 554–glycine 569 the composition is skewed to basic residues. The segment covering lysine 579–phenylalanine 590 has biased composition (basic and acidic residues).

Belongs to the DEAD box helicase family. DDX18/HAS1 subfamily.

It catalyses the reaction ATP + H2O = ADP + phosphate + H(+). This Oryza sativa subsp. japonica (Rice) protein is Putative DEAD-box ATP-dependent RNA helicase 51.